A 21-amino-acid chain; its full sequence is Brevinin-1OKb (21 aa).

Lysine amide is present on K21.

In terms of tissue distribution, expressed by the skin glands.

The protein resides in the secreted. In terms of biological role, antimicrobial peptide. The sequence is that of Brevinin-1OKb from Nidirana okinavana (Kampira Falls frog).